The following is a 201-amino-acid chain: ATP-dependent Clp protease proteolytic subunit (201 aa).

The active-site Nucleophile is serine 105. Histidine 130 is a catalytic residue.

It belongs to the peptidase S14 family. Fourteen ClpP subunits assemble into 2 heptameric rings which stack back to back to give a disk-like structure with a central cavity, resembling the structure of eukaryotic proteasomes.

Its subcellular location is the cytoplasm. It catalyses the reaction Hydrolysis of proteins to small peptides in the presence of ATP and magnesium. alpha-casein is the usual test substrate. In the absence of ATP, only oligopeptides shorter than five residues are hydrolyzed (such as succinyl-Leu-Tyr-|-NHMec, and Leu-Tyr-Leu-|-Tyr-Trp, in which cleavage of the -Tyr-|-Leu- and -Tyr-|-Trp bonds also occurs).. Cleaves peptides in various proteins in a process that requires ATP hydrolysis. Has a chymotrypsin-like activity. Plays a major role in the degradation of misfolded proteins. In Aquifex aeolicus (strain VF5), this protein is ATP-dependent Clp protease proteolytic subunit.